Reading from the N-terminus, the 420-residue chain is D-tagatose-1,6-bisphosphate aldolase subunit GatZ (420 aa).

This sequence belongs to the GatZ/KbaZ family. GatZ subfamily. In terms of assembly, forms a complex with GatY.

Its pathway is carbohydrate metabolism; D-tagatose 6-phosphate degradation; D-glyceraldehyde 3-phosphate and glycerone phosphate from D-tagatose 6-phosphate: step 2/2. In terms of biological role, component of the tagatose-1,6-bisphosphate aldolase GatYZ that is required for full activity and stability of the Y subunit. Could have a chaperone-like function for the proper and stable folding of GatY. When expressed alone, GatZ does not show any aldolase activity. Is involved in the catabolism of galactitol. This Escherichia coli O6:K15:H31 (strain 536 / UPEC) protein is D-tagatose-1,6-bisphosphate aldolase subunit GatZ.